The following is a 424-amino-acid chain: Elongation factor 1-alpha (424 aa).

The 219-residue stretch at 5-223 (KPHMNLVIIG…NALQVPAKPV (219 aa)) folds into the tr-type G domain. The tract at residues 14–21 (GHVDHGKS) is G1. 14–21 (GHVDHGKS) contacts GTP. S21 is a Mg(2+) binding site. The segment at 70-74 (GVTID) is G2. A G3 region spans residues 91 to 94 (DAPG). GTP-binding positions include 91–95 (DAPGH) and 148–151 (NKMD). The segment at 148-151 (NKMD) is G4. The G5 stretch occupies residues 187 to 189 (SGY).

Belongs to the TRAFAC class translation factor GTPase superfamily. Classic translation factor GTPase family. EF-Tu/EF-1A subfamily.

The protein localises to the cytoplasm. The catalysed reaction is GTP + H2O = GDP + phosphate + H(+). GTP hydrolase that promotes the GTP-dependent binding of aminoacyl-tRNA to the A-site of ribosomes during protein biosynthesis. This chain is Elongation factor 1-alpha, found in Picrophilus torridus (strain ATCC 700027 / DSM 9790 / JCM 10055 / NBRC 100828 / KAW 2/3).